A 471-amino-acid chain; its full sequence is A-type ATP synthase subunit B (471 aa).

The protein belongs to the ATPase alpha/beta chains family. Has multiple subunits with at least A(3), B(3), C, D, E, F, H, I and proteolipid K(x).

The protein resides in the cell membrane. In terms of biological role, component of the A-type ATP synthase that produces ATP from ADP in the presence of a proton gradient across the membrane. The B chain is a regulatory subunit. The chain is A-type ATP synthase subunit B from Natronomonas pharaonis (strain ATCC 35678 / DSM 2160 / CIP 103997 / JCM 8858 / NBRC 14720 / NCIMB 2260 / Gabara) (Halobacterium pharaonis).